The chain runs to 72 residues: Small ribosomal subunit protein bS18c (72 aa).

It belongs to the bacterial ribosomal protein bS18 family. As to quaternary structure, part of the 30S ribosomal subunit.

It localises to the plastid. Its subcellular location is the chloroplast. The chain is Small ribosomal subunit protein bS18c from Thalassiosira pseudonana (Marine diatom).